The sequence spans 133 residues: Small ribosomal subunit protein uS11 (133 aa).

Belongs to the universal ribosomal protein uS11 family. In terms of assembly, part of the 30S ribosomal subunit. Interacts with proteins S7 and S18. Binds to IF-3.

In terms of biological role, located on the platform of the 30S subunit, it bridges several disparate RNA helices of the 16S rRNA. Forms part of the Shine-Dalgarno cleft in the 70S ribosome. This chain is Small ribosomal subunit protein uS11, found in Brevibacillus brevis (strain 47 / JCM 6285 / NBRC 100599).